A 547-amino-acid polypeptide reads, in one-letter code: MSDDWKANLNIPAKDSRPQTEDVTKTQGKSFEEFGLKRELLMGIFEAGFEKPSPIQEESIPMALAGRDILARAKNGTGKTASFIIPALQQVKTKLNKIQVLILVPTRELALQTSQVVKTLGKHLKLQCMVTTGGTLLRDDVMRLDEPVHILVGTPGRVLDLAARSIADFSECPMFVMDEADKMLSREFKGIIEQILEFFPKNRQSLLFSATFPLAVKSFMDKHLNKPYEINLMDELTLRGISQFYAFVEEKQKLHCLNTLFSKLKINQAIIFCNSTNRVELLAKKITELGYSCYYSHAKMPQQARNKVFHEFRQGSVRTLVCSDLLTRGIDIQAVNVVINFDFPKTAETYLHRIGRSGRFGHLGLAINFIHWDDRKSLFNIETELGTEIKPIPSDIDRSLYVTEDEASIPRPFKIDELPKGNEHSRKRNGYEYRGQPTSQGFPQQPPQANTGYNQVPQGSPQAQGLQGSPQGLQGSPQGIPQGSPQGIPQGIPQGLPQGVPQFPQGYPQGIPPQGPQAYQNYQIPPQQVPAQFNGHSQYSQYQSQPF.

Residues 1 to 27 (MSDDWKANLNIPAKDSRPQTEDVTKTQ) are disordered. Residues 14–27 (KDSRPQTEDVTKTQ) show a composition bias toward basic and acidic residues. Positions 29–57 (KSFEEFGLKRELLMGIFEAGFEKPSPIQE) match the Q motif motif. The Helicase ATP-binding domain occupies 60-230 (IPMALAGRDI…DKHLNKPYEI (171 aa)). 73-80 (AKNGTGKT) provides a ligand contact to ATP. The DEAD box motif lies at 178–181 (DEAD). Residues 240-400 (GISQFYAFVE…PIPSDIDRSL (161 aa)) form the Helicase C-terminal domain. Positions 412-547 (PFKIDELPKG…QYSQYQSQPF (136 aa)) are disordered. A compositionally biased stretch (basic and acidic residues) spans 413 to 424 (FKIDELPKGNEH). Polar residues predominate over residues 436-456 (QPTSQGFPQQPPQANTGYNQV). Low complexity predominate over residues 457-509 (PQGSPQAQGLQGSPQGLQGSPQGIPQGSPQGIPQGIPQGLPQGVPQFPQGYPQ). The segment covering 521–547 (NYQIPPQQVPAQFNGHSQYSQYQSQPF) has biased composition (polar residues).

This sequence belongs to the DEAD box helicase family. DDX6/DHH1 subfamily.

Its subcellular location is the cytoplasm. It localises to the P-body. It catalyses the reaction ATP + H2O = ADP + phosphate + H(+). Its function is as follows. ATP-dependent RNA helicase involved in mRNA turnover, and more specifically in mRNA decapping by activating the decapping enzyme DCP1. Is involved in G1/S DNA-damage checkpoint recovery, probably through the regulation of the translational status of a subset of mRNAs. May also have a role in translation and mRNA nuclear export. The protein is ATP-dependent RNA helicase DHH1 (DHH1) of Meyerozyma guilliermondii (strain ATCC 6260 / CBS 566 / DSM 6381 / JCM 1539 / NBRC 10279 / NRRL Y-324) (Yeast).